The chain runs to 241 residues: Ribonuclease PH (241 aa).

Residues R89 and 127 to 129 contribute to the phosphate site; that span reads GTR.

It belongs to the RNase PH family. In terms of assembly, homohexameric ring arranged as a trimer of dimers.

The catalysed reaction is tRNA(n+1) + phosphate = tRNA(n) + a ribonucleoside 5'-diphosphate. In terms of biological role, phosphorolytic 3'-5' exoribonuclease that plays an important role in tRNA 3'-end maturation. Removes nucleotide residues following the 3'-CCA terminus of tRNAs; can also add nucleotides to the ends of RNA molecules by using nucleoside diphosphates as substrates, but this may not be physiologically important. Probably plays a role in initiation of 16S rRNA degradation (leading to ribosome degradation) during starvation. In Xylella fastidiosa (strain M23), this protein is Ribonuclease PH.